We begin with the raw amino-acid sequence, 493 residues long: Aerolysin (493 aa).

A signal peptide spans 1–23; sequence MQKIKLTGLSLIISGLLMAQAQA. Disulfide bonds link cysteine 42–cysteine 98 and cysteine 182–cysteine 187. An interaction with host N-linked glycan region spans residues 68–84; that stretch reads WQISGLANGWVIMGPGY. Residues 256–288 are part of the transmembrane beta-barrel after proteolytic activation of the toxin and insertion into the host membrane; the sequence is YGLSEKVTTKNKFKWPLVGETELSIEIAANQSW. The interaction with glycans from host GPI-anchor stretch occupies residues 346–355; that stretch reads RWGGNAWYTH. Positions 446 to 493 are excised as a propeptide; that stretch reads AADSKVRRARSVDGAGQGLRLEIPLDAQELSGLGFNNVSLSVTPAANQ.

This sequence belongs to the aerolysin family. As to quaternary structure, homodimer in solution; homoheptamer in the host membrane. After binding to GPI-anchored proteins in target membranes and proteolytic removal of the C-terminal propeptide, the protein assembles into a heptameric pre-pore complex. A further conformation change leads to insertion into the host membrane. In terms of processing, proteolytic cleavage and subsequent release of the propeptide trigger a major conformation change, leading to the formation of a heptameric pre-pore that then inserts into the host membrane.

It localises to the secreted. Its subcellular location is the host cell membrane. In terms of biological role, secreted, cytolytic toxin that forms pores in host membranes after proteolytic removal of a C-terminal propeptide, leading to destruction of the membrane permeability barrier and host cell death. The pores are formed by transmembrane beta-strands and are approximately 3 nm in diameter. The protein is Aerolysin (aerA) of Aeromonas hydrophila.